A 361-amino-acid polypeptide reads, in one-letter code: Lactate-binding periplasmic protein TTHA0766 (361 aa).

A signal peptide (tat-type signal) is located at residues 1–22 (MKRVSRRAFLRRLGVGVAATAA). Tyr-101, Asn-158, and Arg-178 together coordinate substrate. A Ca(2+)-binding site is contributed by Asn-158. The Ca(2+) site is built by Asp-216, Phe-217, and Gln-247. Substrate-binding positions include Phe-217 and 247–250 (QPVD).

Belongs to the bacterial solute-binding protein 7 family. Homodimer. The complex comprises the extracytoplasmic solute receptor protein TTHA0766, and the two putative transmembrane proteins TTHA0767 and TTHA0768.

The protein resides in the periplasm. Functionally, part of the tripartite ATP-independent periplasmic (TRAP) transport system involved in the uptake of lactate. This protein specifically binds L-lactate. This Thermus thermophilus (strain ATCC 27634 / DSM 579 / HB8) protein is Lactate-binding periplasmic protein TTHA0766.